Consider the following 613-residue polypeptide: Probable indole-3-acetic acid-amido synthetase GH3.12 (613 aa).

It belongs to the IAA-amido conjugating enzyme family. In terms of tissue distribution, expressed in roots.

May catalyze the synthesis of indole-3-acetic acid (IAA)-amino acid conjugates, providing a mechanism for the plant to cope with the presence of excess auxin. This chain is Probable indole-3-acetic acid-amido synthetase GH3.12 (GH3.12), found in Oryza sativa subsp. japonica (Rice).